A 713-amino-acid polypeptide reads, in one-letter code: Denticleless protein homolog (713 aa).

3 WD repeats span residues 47–89, 96–135, and 138–178; these read GAAV…VQRL, AHTN…LIGE, and GHQC…KDGF. The DDB1-binding motif motif lies at 168–171; that stretch reads WDTR. Positions 197–204 match the Nuclear localization signal motif; the sequence is PSKVKKRK. 4 WD repeats span residues 215–254, 270–309, 314–355, and 359–399; these read DSQQ…SAYR, TRKL…TEPV, GHQN…VPPV, and GHCQ…EDSA. The DDB1-binding motif motif lies at 244–247; the sequence is WDLR. Disordered stretches follow at residues 474–544, 604–623, and 635–700; these read TPQR…EKRA, GFDQ…NGTV, and SDLR…TPGS. Polar residues-rich tracts occupy residues 504–516 and 612–623; these read TPKS…TKTP and GPSTSFLINGTV. Residues 635–644 are compositionally biased toward basic and acidic residues; the sequence is SDLRDKENSS. Residues 686–699 show a composition bias toward polar residues; that stretch reads NAPNSPVSVPTTPG.

This sequence belongs to the WD repeat cdt2 family. In terms of assembly, component of the DCX(DTL) E3 ubiquitin ligase complex, at least composed of cul4 (cul4a or cul4b), ddb1, dtl/cdt2 and rbx1.

It localises to the nucleus. Its subcellular location is the cytoplasm. The protein resides in the cytoskeleton. It is found in the microtubule organizing center. The protein localises to the centrosome. It localises to the chromosome. It participates in protein modification; protein ubiquitination. Its function is as follows. Substrate-specific adapter of a DCX (DDB1-CUL4-X-box) E3 ubiquitin-protein ligase complex required for cell cycle control, DNA damage response and translesion DNA synthesis. The DCX(DTL) complex, also named CRL4(CDT2) complex, mediates the polyubiquitination and subsequent degradation of CDT1, CDKN1A/p21(CIP1), KMT5A and SDE2. CDT1 degradation in response to DNA damage is necessary to ensure proper cell cycle regulation of DNA replication. CDKN1A/p21(CIP1) degradation during S phase or following UV irradiation is essential to control replication licensing. KMT5A degradation is also important for a proper regulation of mechanisms such as TGF-beta signaling, cell cycle progression, DNA repair and cell migration. Most substrates require their interaction with PCNA for their polyubiquitination: substrates interact with PCNA via their PIP-box, and those containing the 'K+4' motif in the PIP box, recruit the DCX(DTL) complex, leading to their degradation. In undamaged proliferating cells, the DCX(DTL) complex also promotes the 'Lys-164' monoubiquitination of PCNA, thereby being involved in PCNA-dependent translesion DNA synthesis. May play a role in the regulation of the circadian clock. The sequence is that of Denticleless protein homolog (dtl) from Xenopus tropicalis (Western clawed frog).